The chain runs to 828 residues: Periplasmic nitrate reductase (828 aa).

A signal peptide (tat-type signal) is located at residues 1 to 31 (MKLSRRSFMKANAVAAAAAAAGLSVPGVARA). One can recognise a 4Fe-4S Mo/W bis-MGD-type domain in the interval 39-95 (IKWDKAPCRFCGTGCGVLVGTQQGRVVACQGDPDAPVNRGLNCIKGYFLPKIMYGKD). [4Fe-4S] cluster contacts are provided by C46, C49, C53, and C81. Residues K83, Q150, N175, C179, 212–219 (WGSNMAEM), 243–247 (STFQH), 262–264 (QSD), M372, Q376, N482, 508–509 (SD), K531, D558, and 718–727 (TGRVLEHWHT) contribute to the Mo-bis(molybdopterin guanine dinucleotide) site. Residue F794 participates in substrate binding. The Mo-bis(molybdopterin guanine dinucleotide) site is built by N802 and K819.

It belongs to the prokaryotic molybdopterin-containing oxidoreductase family. NasA/NapA/NarB subfamily. Component of the periplasmic nitrate reductase NapAB complex composed of NapA and NapB. [4Fe-4S] cluster is required as a cofactor. Requires Mo-bis(molybdopterin guanine dinucleotide) as cofactor. Predicted to be exported by the Tat system. The position of the signal peptide cleavage has not been experimentally proven.

It localises to the periplasm. The enzyme catalyses 2 Fe(II)-[cytochrome] + nitrate + 2 H(+) = 2 Fe(III)-[cytochrome] + nitrite + H2O. Functionally, catalytic subunit of the periplasmic nitrate reductase complex NapAB. Receives electrons from NapB and catalyzes the reduction of nitrate to nitrite. The polypeptide is Periplasmic nitrate reductase (Salmonella dublin (strain CT_02021853)).